We begin with the raw amino-acid sequence, 354 residues long: L-Lys-D/L-Arg epimerase (354 aa).

Residues threonine 135 and 160–162 (KIK) each bind substrate. Mg(2+)-binding residues include aspartate 190, glutamate 215, and aspartate 240. Residues lysine 265, aspartate 295, and 318-320 (DLD) contribute to the substrate site.

This sequence belongs to the mandelate racemase/muconate lactonizing enzyme family. Mg(2+) is required as a cofactor.

Catalyzes the epimerization of L-Lys-L-Arg to L-Lys-D-Arg (in vitro). Catalyzes the epimerization of positively charged dipeptides, with a preference for substrates with a basic amino acid in the second position. Has epimerase activity with L-Lys-L-Lys, L-Arg-L-Arg, L-Val-L-Arg, L-Val-L-Lys and L-Ala-L-Arg (in vitro). This Desulforapulum autotrophicum (strain ATCC 43914 / DSM 3382 / VKM B-1955 / HRM2) (Desulfobacterium autotrophicum) protein is L-Lys-D/L-Arg epimerase.